Reading from the N-terminus, the 204-residue chain is Elongation factor Ts (204 aa).

Residues 80–83 (TDFV) are involved in Mg(2+) ion dislocation from EF-Tu.

The protein belongs to the EF-Ts family.

The protein localises to the cytoplasm. Its function is as follows. Associates with the EF-Tu.GDP complex and induces the exchange of GDP to GTP. It remains bound to the aminoacyl-tRNA.EF-Tu.GTP complex up to the GTP hydrolysis stage on the ribosome. This Thermoanaerobacter sp. (strain X514) protein is Elongation factor Ts.